Consider the following 424-residue polypeptide: Satellite RNA 48 kDa protein (424 aa).

The interval 15–78 (TQTRPRIVPK…SNNPGRPSRK (64 aa)) is disordered. 2 stretches are compositionally biased toward polar residues: residues 31 to 42 (RTYSRPRSSLSD) and 62 to 73 (NGSQGRCSNNPG).

It belongs to the nepovirus satellite RNA 48 kDa protein family.

The polypeptide is Satellite RNA 48 kDa protein (Allium porrum (Leek)).